Reading from the N-terminus, the 376-residue chain is 1-deoxy-D-xylulose 5-phosphate reductoisomerase (376 aa).

Residues Thr-12, Gly-13, Ser-14, Ile-15, Asn-39, and Asn-116 each coordinate NADPH. Residue Lys-117 coordinates 1-deoxy-D-xylulose 5-phosphate. Glu-118 serves as a coordination point for NADPH. Asp-142 is a Mn(2+) binding site. Residues Ser-143, Glu-144, Ser-164, and His-187 each coordinate 1-deoxy-D-xylulose 5-phosphate. A Mn(2+)-binding site is contributed by Glu-144. Gly-193 is an NADPH binding site. 1-deoxy-D-xylulose 5-phosphate-binding residues include Ser-200, Asn-205, Lys-206, and Glu-209. Glu-209 contributes to the Mn(2+) binding site.

The protein belongs to the DXR family. It depends on Mg(2+) as a cofactor. Mn(2+) serves as cofactor.

The enzyme catalyses 2-C-methyl-D-erythritol 4-phosphate + NADP(+) = 1-deoxy-D-xylulose 5-phosphate + NADPH + H(+). Its pathway is isoprenoid biosynthesis; isopentenyl diphosphate biosynthesis via DXP pathway; isopentenyl diphosphate from 1-deoxy-D-xylulose 5-phosphate: step 1/6. Its function is as follows. Catalyzes the NADPH-dependent rearrangement and reduction of 1-deoxy-D-xylulose-5-phosphate (DXP) to 2-C-methyl-D-erythritol 4-phosphate (MEP). This Thermotoga maritima (strain ATCC 43589 / DSM 3109 / JCM 10099 / NBRC 100826 / MSB8) protein is 1-deoxy-D-xylulose 5-phosphate reductoisomerase.